The following is a 212-amino-acid chain: MKSKFIVIEGLEGAGKTSVIQQIITILHSNGIHNIISTRDPGGTPLAETIRDIIKKGMNGEYITDYTELLLLYAARTQLVAQVIKPALMSGTWVISDRYDLSSQAYQGGGRGIDIRLLQNLRDAALGKFYPDLTIYLDLPPSKCRARIRARGIPLDRIEMESLSFFQRTSIRYRELVANDSRIITIDAQQSIAELNATIRNNIERWLKSQQK.

10–17 serves as a coordination point for ATP; that stretch reads GLEGAGKT.

The protein belongs to the thymidylate kinase family.

It carries out the reaction dTMP + ATP = dTDP + ADP. In terms of biological role, phosphorylation of dTMP to form dTDP in both de novo and salvage pathways of dTTP synthesis. This chain is Thymidylate kinase, found in Baumannia cicadellinicola subsp. Homalodisca coagulata.